Here is a 325-residue protein sequence, read N- to C-terminus: tRNA N6-adenosine threonylcarbamoyltransferase (325 aa).

Residues His-107 and His-111 each contribute to the Fe cation site. Substrate is bound by residues 129–133, Asp-162, Gly-175, and Asn-265; that span reads LVSGG. Fe cation is bound at residue Asp-293.

The protein belongs to the KAE1 / TsaD family. It depends on Fe(2+) as a cofactor.

It localises to the cytoplasm. The catalysed reaction is L-threonylcarbamoyladenylate + adenosine(37) in tRNA = N(6)-L-threonylcarbamoyladenosine(37) in tRNA + AMP + H(+). Its function is as follows. Required for the formation of a threonylcarbamoyl group on adenosine at position 37 (t(6)A37) in tRNAs that read codons beginning with adenine. Is involved in the transfer of the threonylcarbamoyl moiety of threonylcarbamoyl-AMP (TC-AMP) to the N6 group of A37, together with TsaE and TsaB. TsaD likely plays a direct catalytic role in this reaction. In Sulfurimonas denitrificans (strain ATCC 33889 / DSM 1251) (Thiomicrospira denitrificans (strain ATCC 33889 / DSM 1251)), this protein is tRNA N6-adenosine threonylcarbamoyltransferase.